The chain runs to 496 residues: L-arabinose isomerase (496 aa).

The Mn(2+) site is built by Glu-306, Glu-331, His-348, and His-447.

This sequence belongs to the arabinose isomerase family. It depends on Mn(2+) as a cofactor.

It catalyses the reaction beta-L-arabinopyranose = L-ribulose. It participates in carbohydrate degradation; L-arabinose degradation via L-ribulose; D-xylulose 5-phosphate from L-arabinose (bacterial route): step 1/3. Catalyzes the conversion of L-arabinose to L-ribulose. The protein is L-arabinose isomerase of Geobacillus kaustophilus (strain HTA426).